The primary structure comprises 95 residues: Nucleoid-associated protein MMOB0740 (95 aa).

This sequence belongs to the YbaB/EbfC family. Homodimer.

Its subcellular location is the cytoplasm. The protein localises to the nucleoid. Its function is as follows. Binds to DNA and alters its conformation. May be involved in regulation of gene expression, nucleoid organization and DNA protection. In Mycoplasma mobile (strain ATCC 43663 / 163K / NCTC 11711) (Mesomycoplasma mobile), this protein is Nucleoid-associated protein MMOB0740.